Here is a 418-residue protein sequence, read N- to C-terminus: MLHPRARTMLLLSLPAVAIGIASSLILIVVMKIASVLQNLLWQRLPGTLGIAQDSPIWIIGVLTLTGIAVGLVIRFSQGHAGPDPACEPLIGAPVPPSALPGLIVALILGLAGGVSLGPEHPIMTVNIALAVAIGARLLPRVNRMEWTILASAGTIGALFGTPVAAALIFSQTLNGSSEVPLWDRLFAPLMAAAAGALTTGLFFHPHFSLPIAHYGQMEMTDILSGAIVAAIAIAAGMVAVWCLPRLHAMMNQMKNPVLVLGIGGFILGILGVIGGPVSLFKGLDEMQQMVANQAFSTSDYFLLAVIKLAALVVAAASGFRGGRIFPAVFVGVALGLMLHEHVPAVPAAITVSCAILGIVLVVTRDGWLSLFMAAVVVPNTTLLPLLCIVMLPAWLLLAGKPMMMVNRPKQQPPHDNV.

A run of 12 helical transmembrane segments spans residues 10–30, 54–74, 99–119, 120–140, 149–169, 186–206, 223–243, 258–278, 300–320, 322–342, 343–363, and 371–391; these read LLLSLPAVAIGIASSLILIVV, DSPIWIIGVLTLTGIAVGLVI, ALPGLIVALILGLAGGVSLGP, EHPIMTVNIALAVAIGARLLP, ILASAGTIGALFGTPVAAALI, LFAPLMAAAAGALTTGLFFHP, ILSGAIVAAIAIAAGMVAVWC, VLVLGIGGFILGILGVIGGPV, DYFLLAVIKLAALVVAAASGF, GGRIFPAVFVGVALGLMLHEH, VPAVPAAITVSCAILGIVLVV, and LFMAAVVVPNTTLLPLLCIVM.

The protein belongs to the chloride channel (TC 2.A.49) family.

It localises to the cell membrane. The chain is Putative ion-transport protein YfeO from Shigella sonnei (strain Ss046).